We begin with the raw amino-acid sequence, 162 residues long: 2-C-methyl-D-erythritol 2,4-cyclodiphosphate synthase (162 aa).

Residues aspartate 9 and histidine 11 each coordinate a divalent metal cation. Residues 9-11 (DVH) and 35-36 (HS) contribute to the 4-CDP-2-C-methyl-D-erythritol 2-phosphate site. Position 43 (histidine 43) interacts with a divalent metal cation. 4-CDP-2-C-methyl-D-erythritol 2-phosphate-binding positions include 57–59 (DIG), 62–66 (FPDTD), 133–136 (TTTE), phenylalanine 140, and arginine 143.

This sequence belongs to the IspF family. As to quaternary structure, homotrimer. A divalent metal cation serves as cofactor.

The catalysed reaction is 4-CDP-2-C-methyl-D-erythritol 2-phosphate = 2-C-methyl-D-erythritol 2,4-cyclic diphosphate + CMP. The protein operates within isoprenoid biosynthesis; isopentenyl diphosphate biosynthesis via DXP pathway; isopentenyl diphosphate from 1-deoxy-D-xylulose 5-phosphate: step 4/6. Involved in the biosynthesis of isopentenyl diphosphate (IPP) and dimethylallyl diphosphate (DMAPP), two major building blocks of isoprenoid compounds. Catalyzes the conversion of 4-diphosphocytidyl-2-C-methyl-D-erythritol 2-phosphate (CDP-ME2P) to 2-C-methyl-D-erythritol 2,4-cyclodiphosphate (ME-CPP) with a corresponding release of cytidine 5-monophosphate (CMP). This chain is 2-C-methyl-D-erythritol 2,4-cyclodiphosphate synthase, found in Histophilus somni (strain 129Pt) (Haemophilus somnus).